We begin with the raw amino-acid sequence, 424 residues long: MIVLILVFRLVIGEQMIDVLGPEKRRRRTTQEKIAIVQQSFEPGMTVSLVARQHGVAASQLFLWRKQYQEGSLTAVAAGEQVVPASELAAAMKQIKELQRLLGKKTMENELLKEAVEYGRAKKWIAHAPLIARGWGVSLVSRCLRVSRAQLHVILRRTDDWMDGRRSRHTDDTDVLLRIHHVIGELPTYGYRRVWALLRRQAELDGMPAINAKRVYRIMRQNALLLERKPAVPPSKRAHTGRVAVKESNQRWCSDGFEFCCDNGERLRVTFALDCCDREALHWAVTTGGFNSETVQDVMLGAVERRFGNDLPSSPVEWLTDNGSCYRANETRQFARMLGLEPKNTAVRSPESNGIAESFVKTIKRDYISIMPKPDGLTAAKNLAEAFEHYNEWHPHSALGYRSPREYLRHGACNGLSDNRCLEI.

An Integrase catalytic domain is found at 229–412 (KPAVPPSKRA…SPREYLRHGA (184 aa)).

The protein belongs to the transposase 8 family.

This chain is Insertion element IS2A uncharacterized 48.2 kDa protein, found in Escherichia coli.